Here is a 54-residue protein sequence, read N- to C-terminus: Large ribosomal subunit protein bL33B (54 aa).

It belongs to the bacterial ribosomal protein bL33 family.

In Streptomyces coelicolor (strain ATCC BAA-471 / A3(2) / M145), this protein is Large ribosomal subunit protein bL33B (rpmG2).